A 585-amino-acid polypeptide reads, in one-letter code: Probable long-chain-fatty-acid--AMP ligase FadD30 (585 aa).

This sequence belongs to the ATP-dependent AMP-binding enzyme family.

It participates in lipid metabolism; fatty acid biosynthesis. In terms of biological role, catalyzes the activation of long-chain fatty acids as acyl-adenylates (acyl-AMP), which are then transferred to a multifunctional polyketide synthase (PKS) for further chain extension. The sequence is that of Probable long-chain-fatty-acid--AMP ligase FadD30 (fadD30) from Mycobacterium tuberculosis (strain CDC 1551 / Oshkosh).